We begin with the raw amino-acid sequence, 256 residues long: Large ribosomal subunit protein bL28m (256 aa).

The N-terminal 55 residues, 1 to 55 (MPLHKVPVGLWKRLRLREGIYSRLPAHYLRSLEEARTPTPVHFRPHGAKFKINPK), are a transit peptide targeting the mitochondrion.

It belongs to the bacterial ribosomal protein bL28 family. As to quaternary structure, component of the mitochondrial ribosome large subunit (39S) which comprises a 16S rRNA and about 50 distinct proteins. Interacts with OXA1L.

The protein resides in the mitochondrion. The sequence is that of Large ribosomal subunit protein bL28m (MRPL28) from Bos taurus (Bovine).